The following is a 221-amino-acid chain: GTP cyclohydrolase III (221 aa).

Belongs to the archaeal-type GTP cyclohydrolase family.

The enzyme catalyses GTP + 3 H2O = 2-amino-5-formylamino-6-(5-phospho-D-ribosylamino)pyrimidin-4(3H)-one + 2 phosphate + 2 H(+). Catalyzes the formation of 2-amino-5-formylamino-6-ribofuranosylamino-4(3H)-pyrimidinone ribonucleotide monophosphate and inorganic phosphate from GTP. Also has an independent pyrophosphate phosphohydrolase activity. The polypeptide is GTP cyclohydrolase III (Pyrobaculum neutrophilum (strain DSM 2338 / JCM 9278 / NBRC 100436 / V24Sta) (Thermoproteus neutrophilus)).